We begin with the raw amino-acid sequence, 343 residues long: UDP-3-O-acylglucosamine N-acyltransferase (343 aa).

Residue histidine 248 is the Proton acceptor of the active site.

Belongs to the transferase hexapeptide repeat family. LpxD subfamily. As to quaternary structure, homotrimer.

It catalyses the reaction a UDP-3-O-[(3R)-3-hydroxyacyl]-alpha-D-glucosamine + a (3R)-hydroxyacyl-[ACP] = a UDP-2-N,3-O-bis[(3R)-3-hydroxyacyl]-alpha-D-glucosamine + holo-[ACP] + H(+). It participates in bacterial outer membrane biogenesis; LPS lipid A biosynthesis. In terms of biological role, catalyzes the N-acylation of UDP-3-O-acylglucosamine using 3-hydroxyacyl-ACP as the acyl donor. Is involved in the biosynthesis of lipid A, a phosphorylated glycolipid that anchors the lipopolysaccharide to the outer membrane of the cell. This is UDP-3-O-acylglucosamine N-acyltransferase from Microcystis aeruginosa (strain NIES-843 / IAM M-2473).